The following is a 110-amino-acid chain: Iron-sulfur cluster assembly protein CyaY (110 aa).

It belongs to the frataxin family.

Functionally, involved in iron-sulfur (Fe-S) cluster assembly. May act as a regulator of Fe-S biogenesis. In Paracidovorax citrulli (strain AAC00-1) (Acidovorax citrulli), this protein is Iron-sulfur cluster assembly protein CyaY.